The chain runs to 339 residues: Trace amine-associated receptor 2 (339 aa).

Topologically, residues 1–36 (MTSFEAQQETFDCSEYGNGSCPENERSLGVRAAMYS) are extracellular. N-linked (GlcNAc...) asparagine glycosylation is present at Asn-18. Cystine bridges form between Cys-21–Cys-185 and Cys-104–Cys-189. Residues 37–57 (LMAGAIFITIFGNLVMIISIS) traverse the membrane as a helical segment. Topologically, residues 58–67 (YFKQLHTPTN) are cytoplasmic. The chain crosses the membrane as a helical span at residues 68–88 (LLILSMAVTDFLLGFTIMPYS). Residues 89 to 106 (MVRSVENCWYFGLTFCKI) are Extracellular-facing. Residues 107-127 (HYSFDLMLSITSIFHLCSVAI) traverse the membrane as a helical segment. Residues 128–150 (DRFYAICHPLHYCTKMTIPVVKR) are Cytoplasmic-facing. The chain crosses the membrane as a helical span at residues 151-171 (LLLVCWSVPGAFAFGVVFSEA). The Extracellular portion of the chain corresponds to 172–195 (YADGIEGYDILVACSSSCPVMFNK). A helical membrane pass occupies residues 196–216 (LWGTTLFVAGFFTPSSMMVGI). Over 217 to 251 (YGKIFAVSKKHARVIDNLPENQNNQMRKDKKAAKT) the chain is Cytoplasmic. The helical transmembrane segment at 252-272 (LGIVMGVFLLCWFPCFFTILL) threads the bilayer. At 273–287 (DPFLNFSTPAILFDA) the chain is on the extracellular side. A glycan (N-linked (GlcNAc...) asparagine) is linked at Asn-277. The chain crosses the membrane as a helical span at residues 288 to 310 (LTWFGYFNSTCNPLIYGFFYPWF). Residues 311-339 (RRALRYILLGKIFSSHFHNTNLFTQKETE) lie on the Cytoplasmic side of the membrane.

Belongs to the G-protein coupled receptor 1 family.

The protein resides in the cell membrane. Orphan olfactory receptor specific for trace amines. Trace amine compounds are enriched in animal body fluids and act on trace amine-associated receptors (TAARs) to elicit both intraspecific and interspecific innate behaviors. Ligand-binding causes a conformation change that triggers signaling via the G(s)-class of G-proteins which activate adenylate cyclase. May also be required to provide olfactory input into limbic brain areas to regulate emotional behaviors likely via modulation of the dopamine system. The protein is Trace amine-associated receptor 2 (Taar2) of Rattus norvegicus (Rat).